Reading from the N-terminus, the 587-residue chain is Arginine--tRNA ligase (587 aa).

Residues Pro127 to His137 carry the 'HIGH' region motif.

This sequence belongs to the class-I aminoacyl-tRNA synthetase family. Monomer.

It localises to the cytoplasm. The catalysed reaction is tRNA(Arg) + L-arginine + ATP = L-arginyl-tRNA(Arg) + AMP + diphosphate. The polypeptide is Arginine--tRNA ligase (Pseudomonas aeruginosa (strain ATCC 15692 / DSM 22644 / CIP 104116 / JCM 14847 / LMG 12228 / 1C / PRS 101 / PAO1)).